The chain runs to 441 residues: GTPase Der (441 aa).

2 consecutive EngA-type G domains span residues 4 to 169 (PIVA…PEGS) and 178 to 353 (PKVA…DAQT). Residues 10–17 (GRPNVGKS), 57–61 (DTGGI), 120–123 (NKVD), 184–191 (GKPNVGKS), 231–235 (DTAGL), and 296–299 (NKWD) each bind GTP. Residues 354 to 438 (MRIPTGVLNE…SIRFINRERK (85 aa)) form the KH-like domain.

The protein belongs to the TRAFAC class TrmE-Era-EngA-EngB-Septin-like GTPase superfamily. EngA (Der) GTPase family. Associates with the 50S ribosomal subunit.

In terms of biological role, GTPase that plays an essential role in the late steps of ribosome biogenesis. The sequence is that of GTPase Der from Lachnospira eligens (strain ATCC 27750 / DSM 3376 / VPI C15-48 / C15-B4) (Eubacterium eligens).